A 201-amino-acid chain; its full sequence is ATP-dependent Clp protease proteolytic subunit 2 (201 aa).

Ser-100 functions as the Nucleophile in the catalytic mechanism. Residue His-125 is part of the active site.

This sequence belongs to the peptidase S14 family. In terms of assembly, fourteen ClpP subunits assemble into 2 heptameric rings which stack back to back to give a disk-like structure with a central cavity, resembling the structure of eukaryotic proteasomes.

The protein resides in the cytoplasm. The catalysed reaction is Hydrolysis of proteins to small peptides in the presence of ATP and magnesium. alpha-casein is the usual test substrate. In the absence of ATP, only oligopeptides shorter than five residues are hydrolyzed (such as succinyl-Leu-Tyr-|-NHMec, and Leu-Tyr-Leu-|-Tyr-Trp, in which cleavage of the -Tyr-|-Leu- and -Tyr-|-Trp bonds also occurs).. Cleaves peptides in various proteins in a process that requires ATP hydrolysis. Has a chymotrypsin-like activity. Plays a major role in the degradation of misfolded proteins. The sequence is that of ATP-dependent Clp protease proteolytic subunit 2 from Corynebacterium glutamicum (strain ATCC 13032 / DSM 20300 / JCM 1318 / BCRC 11384 / CCUG 27702 / LMG 3730 / NBRC 12168 / NCIMB 10025 / NRRL B-2784 / 534).